A 537-amino-acid polypeptide reads, in one-letter code: Sodium/hydrogen exchanger 9B2 (537 aa).

The span at M1–Y10 shows a compositional bias: basic and acidic residues. Residues M1–T33 are disordered. At M1–R86 the chain is on the cytoplasmic side. A compositionally biased stretch (polar residues) spans P15–Q27. A Phosphoserine modification is found at S49. A helical membrane pass occupies residues V87 to I104. Topologically, residues T105–G113 are extracellular. Residues N114–G133 traverse the membrane as a helical segment. Residues L134 to P144 lie on the Cytoplasmic side of the membrane. A helical transmembrane segment spans residues S145 to V161. Over I162 to K171 the chain is Extracellular. Residues W172–G189 traverse the membrane as a helical segment. Topologically, residues L190–L200 are cytoplasmic. The chain crosses the membrane as a helical span at residues K201–L227. At G228 to W233 the chain is on the extracellular side. Residues G234 to G242 traverse the membrane as a helical segment. Topologically, residues A243–L270 are cytoplasmic. Residues V244, G275, D278, and D279 each coordinate Na(+). A helical transmembrane segment spans residues L271–L290. Residues G291–V300 are Extracellular-facing. Residues F301–I324 form a helical membrane-spanning segment. The Cytoplasmic segment spans residues Q325 to R339. Residues T340 to F357 traverse the membrane as a helical segment. The Extracellular segment spans residues G358–G361. A helical transmembrane segment spans residues S362–L373. Over A374–A390 the chain is Cytoplasmic. Residues V391 to A411 traverse the membrane as a helical segment. The Extracellular portion of the chain corresponds to S412–T417. The helical transmembrane segment at V418–V440 threads the bilayer. The Cytoplasmic portion of the chain corresponds to C441–A461. A helical transmembrane segment spans residues T462 to D473. Residues T474 to Y486 lie on the Extracellular side of the membrane. A helical transmembrane segment spans residues G487–I509. Over G510–V537 the chain is Cytoplasmic.

This sequence belongs to the monovalent cation:proton antiporter 1 (CPA1) transporter (TC 2.A.36) family. Homodimer; dimerization is essential for SLC9B2 activity. Lipids seem to play a role in the stabilization of the dimerization subdomain.

It is found in the cell membrane. The protein resides in the mitochondrion membrane. The protein localises to the endosome membrane. It localises to the recycling endosome membrane. Its subcellular location is the cytoplasmic vesicle. It is found in the secretory vesicle. The protein resides in the synaptic vesicle membrane. The protein localises to the basolateral cell membrane. It localises to the apical cell membrane. The catalysed reaction is Li(+)(out) + H(+)(in) = Li(+)(in) + H(+)(out). The enzyme catalyses Li(+)(in) + Na(+)(out) = Li(+)(out) + Na(+)(in). It carries out the reaction Na(+)(in) + H(+)(out) = Na(+)(out) + H(+)(in). Allosterically inhibited by the N-terminal domain. Inhibited by phloretin. Functionally, electroneutral Na(+) Li(+)/H(+) antiporter that extrudes Na(+) or Li(+) in exchange for external protons across the membrane. Uses the proton gradient/membrane potential to extrude sodium. Contributes to the regulation of intracellular pH and sodium homeostasis. Also able to mediate Na(+)/Li(+) antiporter activity in kidney. May play a physiological role in renal tubular function and blood pressure homeostasis. Plays an important role for insulin secretion and clathrin-mediated endocytosis in beta-cells. Involved in sperm motility and fertility. It is controversial whether SLC9B2 plays a role in osteoclast differentiation or not. The polypeptide is Sodium/hydrogen exchanger 9B2 (SLC9B2) (Pongo abelii (Sumatran orangutan)).